A 132-amino-acid chain; its full sequence is Translation initiation factor 5A (132 aa).

Lysine 36 carries the post-translational modification Hypusine.

It belongs to the eIF-5A family.

It is found in the cytoplasm. In terms of biological role, functions by promoting the formation of the first peptide bond. The sequence is that of Translation initiation factor 5A (eIF5A) from Thermofilum pendens (strain DSM 2475 / Hrk 5).